Here is a 107-residue protein sequence, read N- to C-terminus: Universal stress protein B homolog (107 aa).

2 consecutive transmembrane segments (helical) span residues 6–26 and 86–106; these read TILF…LTAL and VREL…AAFI.

The protein belongs to the universal stress protein B family.

Its subcellular location is the cell inner membrane. The polypeptide is Universal stress protein B homolog (Vibrio parahaemolyticus serotype O3:K6 (strain RIMD 2210633)).